The primary structure comprises 460 residues: GTPase Der (460 aa).

EngA-type G domains lie at 2-164 and 196-368; these read QSII…HEEF and IRVG…ENFT. Residues 8–15, 55–59, 116–119, 202–209, 249–253, and 313–316 each bind GTP; these read GKPNVGKS, DSGGL, NKVD, GRVNVGKS, DTAGI, and NKWD. Residues 369–453 form the KH-like domain; the sequence is QKIQTSKLNT…PLVIASRKKG (85 aa).

Belongs to the TRAFAC class TrmE-Era-EngA-EngB-Septin-like GTPase superfamily. EngA (Der) GTPase family. In terms of assembly, associates with the 50S ribosomal subunit.

Functionally, GTPase that plays an essential role in the late steps of ribosome biogenesis. The protein is GTPase Der of Campylobacter jejuni subsp. jejuni serotype O:6 (strain 81116 / NCTC 11828).